A 60-amino-acid chain; its full sequence is Potassium channel toxin Tst-beta-KTx (60 aa).

The BetaSPN-type CS-alpha/beta domain occupies 26–60; it reads QFGCPAYEGYCNDHCNDIERKDGECHGFKCKCAKD. 3 disulfide bridges follow: cysteine 29/cysteine 50, cysteine 36/cysteine 55, and cysteine 40/cysteine 57.

This sequence belongs to the long chain scorpion toxin family. Class 1 subfamily. As to expression, expressed by the venom gland.

It is found in the secreted. Inhibits voltage-gated potassium channels Kv1.1/KCNA1, Kv1.2/KCNA2, and Kv1.3/KCNA3. Functionally, does not induce hemolytic activity, lactate dehydrogenase (LDH) release from mast cells, mast cell degranulation, and antimicrobial effects. In vivo, injection into mice causes moderate edema formation, but induces very weak or no change in nociceptive sensibility. It also reduces mice locomotion, suggesting an increase in anxiety, but causes no alteration in rearing (standing on hind limbs). The protein is Potassium channel toxin Tst-beta-KTx of Tityus stigmurus (Brazilian scorpion).